A 232-amino-acid chain; its full sequence is Orotate phosphoribosyltransferase (232 aa).

5-phospho-alpha-D-ribose 1-diphosphate-binding positions include arginine 107, lysine 108, lysine 111, histidine 113, and 133-141 (EDLTTAGGS). Threonine 137 provides a ligand contact to orotate.

This sequence belongs to the purine/pyrimidine phosphoribosyltransferase family. PyrE subfamily. Homodimer. Requires Mg(2+) as cofactor.

The enzyme catalyses orotidine 5'-phosphate + diphosphate = orotate + 5-phospho-alpha-D-ribose 1-diphosphate. The protein operates within pyrimidine metabolism; UMP biosynthesis via de novo pathway; UMP from orotate: step 1/2. Catalyzes the transfer of a ribosyl phosphate group from 5-phosphoribose 1-diphosphate to orotate, leading to the formation of orotidine monophosphate (OMP). The protein is Orotate phosphoribosyltransferase of Sinorhizobium medicae (strain WSM419) (Ensifer medicae).